The primary structure comprises 396 residues: Putative N(4)-(beta-N-acetylglucosaminyl)-L-asparaginase GG24090 (396 aa).

An N-terminal signal peptide occupies residues 1–23; it reads MKRHLGTCLWVLCLASTAFSSLA. 2 disulfide bridges follow: Cys-100–Cys-105 and Cys-199–Cys-215. Residue Thr-246 is the Nucleophile of the active site. Substrate-binding positions include 274-277 and 297-300; these read RVGD and TGDG. Cys-357 and Cys-384 form a disulfide bridge.

This sequence belongs to the Ntn-hydrolase family. As to quaternary structure, heterotetramer of two alpha and two beta chains arranged as a dimer of alpha/beta heterodimers. Post-translationally, cleaved into an alpha and beta chain by autocatalysis; this activates the enzyme. The N-terminal residue of the beta subunit is responsible for the nucleophile hydrolase activity.

It catalyses the reaction N(4)-(beta-N-acetyl-D-glucosaminyl)-L-asparagine + H2O = N-acetyl-beta-D-glucosaminylamine + L-aspartate + H(+). Its function is as follows. Cleaves the GlcNAc-Asn bond which joins oligosaccharides to the peptide of asparagine-linked glycoproteins. This Drosophila erecta (Fruit fly) protein is Putative N(4)-(beta-N-acetylglucosaminyl)-L-asparaginase GG24090.